A 342-amino-acid chain; its full sequence is Succinylglutamate desuccinylase (342 aa).

The Zn(2+) site is built by His-63, Glu-66, and His-155. Glu-219 is a catalytic residue.

Belongs to the AspA/AstE family. Succinylglutamate desuccinylase subfamily. Zn(2+) is required as a cofactor.

The enzyme catalyses N-succinyl-L-glutamate + H2O = L-glutamate + succinate. The protein operates within amino-acid degradation; L-arginine degradation via AST pathway; L-glutamate and succinate from L-arginine: step 5/5. Transforms N(2)-succinylglutamate into succinate and glutamate. The protein is Succinylglutamate desuccinylase of Vibrio cholerae serotype O1 (strain ATCC 39315 / El Tor Inaba N16961).